The chain runs to 417 residues: NADH-quinone oxidoreductase subunit D (417 aa).

Belongs to the complex I 49 kDa subunit family. NDH-1 is composed of 14 different subunits. Subunits NuoB, C, D, E, F, and G constitute the peripheral sector of the complex.

It is found in the cell inner membrane. It catalyses the reaction a quinone + NADH + 5 H(+)(in) = a quinol + NAD(+) + 4 H(+)(out). NDH-1 shuttles electrons from NADH, via FMN and iron-sulfur (Fe-S) centers, to quinones in the respiratory chain. The immediate electron acceptor for the enzyme in this species is believed to be ubiquinone. Couples the redox reaction to proton translocation (for every two electrons transferred, four hydrogen ions are translocated across the cytoplasmic membrane), and thus conserves the redox energy in a proton gradient. In Francisella tularensis subsp. tularensis (strain FSC 198), this protein is NADH-quinone oxidoreductase subunit D.